A 960-amino-acid polypeptide reads, in one-letter code: RNA polymerase II subunit A C-terminal domain phosphatase (960 aa).

Residue M1 is modified to N-acetylmethionine. Residues 178–341 (HRNRKLVLMV…PPAARETQAR (164 aa)) enclose the FCP1 homology domain. The tract at residues 331 to 580 (APPAARETQA…EEDTDDDDHL (250 aa)) is disordered. The span at 439-448 (PGVQPTQGDA) shows a compositional bias: polar residues. The segment covering 453–463 (LDFDLSSDSES) has biased composition (acidic residues). A Phosphoserine modification is found at S530. Positions 547 to 556 (ESQNSEQSGV) are enriched in polar residues. Residues 566-578 (VGEEEEEDTDDDD) are compositionally biased toward acidic residues. The 100-residue stretch at 619 to 718 (LKSKVLADVA…DKVEEQLFPL (100 aa)) folds into the BRCT domain. Phosphoserine is present on residues S664 and S730. Residue K770 is modified to N6-acetyllysine. Disordered stretches follow at residues 770-834 (KLIR…MSEA) and 854-948 (DILG…ADEM). Residues S830, S860, and S863 each carry the phosphoserine modification. The segment covering 854 to 864 (DILGEGSDDSD) has biased composition (acidic residues). Residues 865 to 881 (IEKKKPEDQDNEQERAP) show a composition bias toward basic and acidic residues. Residues 934 to 947 (SNDDEEGSSSEADE) are compositionally biased toward acidic residues.

In terms of assembly, homodimer. Interacts with GTF2F1. Interacts with WDR77, SNRPB and SNRNP70. Phosphorylated. In the presence of TFIIF, the phosphorylated form has an increased CTD phosphatase activity. The phosphorylation is required for the physical interaction with GTF2F1.

It is found in the nucleus. It localises to the cytoplasm. The protein resides in the cytoskeleton. Its subcellular location is the microtubule organizing center. The protein localises to the centrosome. It is found in the spindle. It localises to the spindle pole. The protein resides in the midbody. It carries out the reaction O-phospho-L-seryl-[protein] + H2O = L-seryl-[protein] + phosphate. The enzyme catalyses O-phospho-L-threonyl-[protein] + H2O = L-threonyl-[protein] + phosphate. In terms of biological role, processively dephosphorylates 'Ser-2' and 'Ser-5' of the heptad repeats YSPTSPS in the C-terminal domain of the largest RNA polymerase II subunit. This promotes the activity of RNA polymerase II. Plays a role in the exit from mitosis by dephosphorylating crucial mitotic substrates (USP44, CDC20 and WEE1) that are required for M-phase-promoting factor (MPF)/CDK1 inactivation. The protein is RNA polymerase II subunit A C-terminal domain phosphatase (Ctdp1) of Mus musculus (Mouse).